Reading from the N-terminus, the 118-residue chain is UPF0125 protein RSc1426 (118 aa).

This sequence belongs to the UPF0125 (RnfH) family.

The sequence is that of UPF0125 protein RSc1426 from Ralstonia nicotianae (strain ATCC BAA-1114 / GMI1000) (Ralstonia solanacearum).